A 279-amino-acid chain; its full sequence is NH(3)-dependent NAD(+) synthetase (279 aa).

46–53 (GISGGQDS) contributes to the ATP binding site. D52 lines the Mg(2+) pocket. R145 contacts deamido-NAD(+). T165 provides a ligand contact to ATP. Residue E170 coordinates Mg(2+). Deamido-NAD(+) contacts are provided by K178 and D185. Residues K194 and T216 each coordinate ATP. 265 to 266 (HK) is a binding site for deamido-NAD(+).

Belongs to the NAD synthetase family. In terms of assembly, homodimer.

The catalysed reaction is deamido-NAD(+) + NH4(+) + ATP = AMP + diphosphate + NAD(+) + H(+). The protein operates within cofactor biosynthesis; NAD(+) biosynthesis; NAD(+) from deamido-NAD(+) (ammonia route): step 1/1. In terms of biological role, catalyzes the ATP-dependent amidation of deamido-NAD to form NAD. Uses ammonia as a nitrogen source. The protein is NH(3)-dependent NAD(+) synthetase of Rhodococcus jostii (strain RHA1).